The chain runs to 366 residues: Peroxisomal (S)-2-hydroxy-acid oxidase GLO4 (366 aa).

Positions 1–360 (MEDNLPVNVR…TRSHVMTEGD (360 aa)) constitute an FMN hydroxy acid dehydrogenase domain. Tyr27 is an a 2-oxocarboxylate binding site. Residues 80 to 82 (PTG), Ser109, 130 to 132 (QLY), and Thr158 each bind FMN. Tyr132 contacts a 2-oxocarboxylate. Arg167 is an a 2-oxocarboxylate binding site. Residues Lys231 and Ser253 each contribute to the FMN site. The active-site Proton acceptor is the His255. Arg258 provides a ligand contact to a 2-oxocarboxylate. FMN-binding positions include 286 to 290 (DGGIR) and 309 to 310 (GR). Residues 364–366 (SLL) carry the Microbody targeting signal motif.

This sequence belongs to the FMN-dependent alpha-hydroxy acid dehydrogenase family. As to quaternary structure, homotetramer. Binds to CATB and CATC; these interactions are disturbed by alpha-hydroxy-2-pyridinemethanesulfonic acid (HPMS) and salicylic acid (SA). FMN serves as cofactor.

It localises to the peroxisome. It carries out the reaction a (2S)-2-hydroxycarboxylate + O2 = a 2-oxocarboxylate + H2O2. It functions in the pathway lipid metabolism; fatty acid metabolism. Functionally, oxidase that catalyzes the oxidation of a broad range of 2-hydroxyacids to the corresponding 2-oxoacids, with a reduction of O2 to H2O2. May be involved in a general medium- and long-chain fatty acid catabolic pathway such as alpha-oxidation. In Oryza sativa subsp. japonica (Rice), this protein is Peroxisomal (S)-2-hydroxy-acid oxidase GLO4 (GLO4).